The sequence spans 221 residues: GTP cyclohydrolase 1 (221 aa).

Zn(2+)-binding residues include C111, H114, and C182.

Belongs to the GTP cyclohydrolase I family. In terms of assembly, homomer.

The catalysed reaction is GTP + H2O = 7,8-dihydroneopterin 3'-triphosphate + formate + H(+). The protein operates within cofactor biosynthesis; 7,8-dihydroneopterin triphosphate biosynthesis; 7,8-dihydroneopterin triphosphate from GTP: step 1/1. This Erwinia tasmaniensis (strain DSM 17950 / CFBP 7177 / CIP 109463 / NCPPB 4357 / Et1/99) protein is GTP cyclohydrolase 1.